Reading from the N-terminus, the 571-residue chain is Hemagglutinin-neuraminidase (571 aa).

The Intravirion segment spans residues 1-26 (MDRAVGRVALENEEREAKNTWRFVFR). Residues 27–47 (IAIFLLIVITLAISAAALVYS) traverse the membrane as a helical segment. At 48–571 (MEASTPGDLV…LVEILKEDGV (524 aa)) the chain is on the virion surface side. Residue Asn-119 is glycosylated (N-linked (GlcNAc...) asparagine; by host). The segment at 124 to 152 (GAPVHDPDYIGGIGKELIVDDASDVTSFY) is important for interaction with fusion/F protein. Cystine bridges form between Cys-172-Cys-196, Cys-186-Cys-247, and Cys-238-Cys-251. The involved in neuraminidase activity stretch occupies residues 234-239 (NRKSCS). N-linked (GlcNAc...) asparagine; by host glycosylation is found at Asn-341 and Asn-433. Intrachain disulfides connect Cys-344–Cys-461 and Cys-455–Cys-465. Residues Asn-481, Asn-508, and Asn-538 are each glycosylated (N-linked (GlcNAc...) asparagine; by host). An intrachain disulfide couples Cys-531 to Cys-542.

This sequence belongs to the paramyxoviruses hemagglutinin-neuraminidase family. As to quaternary structure, homotetramer; composed of disulfide-linked homodimers. Interacts with F protein trimer. Interacts with host CG-1B; this interaction inhibits viral adsorption and replication rather than internalization.

The protein localises to the virion membrane. Its subcellular location is the host cell membrane. It carries out the reaction Hydrolysis of alpha-(2-&gt;3)-, alpha-(2-&gt;6)-, alpha-(2-&gt;8)- glycosidic linkages of terminal sialic acid residues in oligosaccharides, glycoproteins, glycolipids, colominic acid and synthetic substrates.. Mediates the viral entry into the host cell together with fusion/F protein. Attaches the virus to sialic acid-containing cell receptors and thereby initiates infection. Binding of HN protein to the receptor induces a conformational change that allows the F protein to trigger virion/cell membranes fusion. In terms of biological role, neuraminidase activity ensures the efficient spread of the virus by dissociating the mature virions from the neuraminic acid containing glycoproteins. The protein is Hemagglutinin-neuraminidase (HN) of Gallus gallus (Chicken).